The primary structure comprises 335 residues: Adenine deaminase (335 aa).

Residues His17, His19, and His197 each coordinate Zn(2+). Catalysis depends on Glu200, which acts as the Proton donor. Asp278 lines the Zn(2+) pocket. A substrate-binding site is contributed by Asp279.

It belongs to the metallo-dependent hydrolases superfamily. Adenosine and AMP deaminases family. Adenine deaminase type 2 subfamily. It depends on Zn(2+) as a cofactor.

The enzyme catalyses adenine + H2O + H(+) = hypoxanthine + NH4(+). Catalyzes the hydrolytic deamination of adenine to hypoxanthine. Plays an important role in the purine salvage pathway and in nitrogen catabolism. The polypeptide is Adenine deaminase (Marinomonas sp. (strain MWYL1)).